The following is a 331-amino-acid chain: Phosphoribosylformylglycinamidine cyclo-ligase (331 aa).

Belongs to the AIR synthase family.

It is found in the cytoplasm. The catalysed reaction is 2-formamido-N(1)-(5-O-phospho-beta-D-ribosyl)acetamidine + ATP = 5-amino-1-(5-phospho-beta-D-ribosyl)imidazole + ADP + phosphate + H(+). The protein operates within purine metabolism; IMP biosynthesis via de novo pathway; 5-amino-1-(5-phospho-D-ribosyl)imidazole from N(2)-formyl-N(1)-(5-phospho-D-ribosyl)glycinamide: step 2/2. The sequence is that of Phosphoribosylformylglycinamidine cyclo-ligase from Clostridium novyi (strain NT).